Reading from the N-terminus, the 714-residue chain is Polyribonucleotide nucleotidyltransferase (714 aa).

Residues D487 and D493 each contribute to the Mg(2+) site. One can recognise a KH domain in the interval 554 to 613; that stretch reads PRIETLKIPTDKIREVIGTGGKVIREIVEKTGAKINIEDDGTVKVASSDGNSIKAAIAWI. Positions 623-691 constitute an S1 motif domain; that stretch reads GQIYEGTVVK…DRGKVRLSMR (69 aa).

The protein belongs to the polyribonucleotide nucleotidyltransferase family. Requires Mg(2+) as cofactor.

It localises to the cytoplasm. It catalyses the reaction RNA(n+1) + phosphate = RNA(n) + a ribonucleoside 5'-diphosphate. Its function is as follows. Involved in mRNA degradation. Catalyzes the phosphorolysis of single-stranded polyribonucleotides processively in the 3'- to 5'-direction. The protein is Polyribonucleotide nucleotidyltransferase of Methylocella silvestris (strain DSM 15510 / CIP 108128 / LMG 27833 / NCIMB 13906 / BL2).